A 167-amino-acid chain; its full sequence is Small ribosomal subunit protein uS5 (167 aa).

An S5 DRBM domain is found at 19 to 82 (LTEKVLHINR…EAARKNMISC (64 aa)).

It belongs to the universal ribosomal protein uS5 family. Part of the 30S ribosomal subunit. Contacts proteins S4 and S8.

Functionally, with S4 and S12 plays an important role in translational accuracy. In terms of biological role, located at the back of the 30S subunit body where it stabilizes the conformation of the head with respect to the body. This Protochlamydia amoebophila (strain UWE25) protein is Small ribosomal subunit protein uS5.